A 311-amino-acid polypeptide reads, in one-letter code: MALPILLDCDPGHDDAIAIVLALASPELDVKAITSSAGNQTPEKTLRNVLCMLTLLNRTDIPVASGAVKPLMRDLIIADNVHGESGLDGPALPEPTFAPQNCTAVELMAKTLCESEEPVTIVSTGPQTNVALLLNSHPELHSKIARIVIMGGAMGLGNWTPAAEFNIYVDPEAAEIVFQSGIPVVMAGLDVTHKAQIHVEDTERFRAIGNPVSTIVAELLDFFLEYHKDEKWGFVGAPLHDPCTIAWLLKPELFTTVERWVGVETQGKYTQGMTVVDYYYLTGNKPNATVMVDVDRQGFVDLLADRLKFYA.

The active site involves histidine 240.

This sequence belongs to the IUNH family. RihA subfamily.

In terms of biological role, hydrolyzes with equal efficiency cytidine or uridine to ribose and cytosine or uracil, respectively. This Escherichia coli (strain SMS-3-5 / SECEC) protein is Pyrimidine-specific ribonucleoside hydrolase RihA.